The primary structure comprises 502 residues: Lysine--tRNA ligase (502 aa).

Residues E403 and E410 each coordinate Mg(2+).

Belongs to the class-II aminoacyl-tRNA synthetase family. In terms of assembly, homodimer. The cofactor is Mg(2+).

The protein localises to the cytoplasm. The enzyme catalyses tRNA(Lys) + L-lysine + ATP = L-lysyl-tRNA(Lys) + AMP + diphosphate. This Parasynechococcus marenigrum (strain WH8102) protein is Lysine--tRNA ligase.